Reading from the N-terminus, the 218-residue chain is Adenylate kinase (218 aa).

Position 10-15 (10-15) interacts with ATP; sequence GAGKGT. Residues 30-59 form an NMP region; that stretch reads STGDIFREAIAKGTELGRKVQDIVNSGNLV. AMP contacts are provided by residues T31, R36, 57–59, 85–88, and Q92; these read NLV and GYPR. Residues 126 to 163 form an LID region; it reads TRRVCSKCGKVYNVITLPSKVEGICDDCGGTLIQRDDD. ATP is bound at residue R127. 2 residues coordinate Zn(2+): C130 and C133. ATP is bound at residue 136–137; the sequence is VY. Zn(2+) contacts are provided by C150 and C153. AMP-binding residues include R160 and R171. ATP is bound at residue K199.

This sequence belongs to the adenylate kinase family. As to quaternary structure, monomer.

It is found in the cytoplasm. The catalysed reaction is AMP + ATP = 2 ADP. It participates in purine metabolism; AMP biosynthesis via salvage pathway; AMP from ADP: step 1/1. Functionally, catalyzes the reversible transfer of the terminal phosphate group between ATP and AMP. Plays an important role in cellular energy homeostasis and in adenine nucleotide metabolism. In Fervidobacterium nodosum (strain ATCC 35602 / DSM 5306 / Rt17-B1), this protein is Adenylate kinase.